The primary structure comprises 393 residues: Erythronate-4-phosphate dehydrogenase (393 aa).

Residues Ser-57 and Thr-79 each contribute to the substrate site. Residue Asp-159 participates in NAD(+) binding. Residue Arg-229 is part of the active site. Residue Asp-253 participates in NAD(+) binding. Glu-258 is a catalytic residue. His-275 (proton donor) is an active-site residue. Gly-278 lines the NAD(+) pocket. Tyr-279 is a binding site for substrate.

The protein belongs to the D-isomer specific 2-hydroxyacid dehydrogenase family. PdxB subfamily. In terms of assembly, homodimer.

It is found in the cytoplasm. It carries out the reaction 4-phospho-D-erythronate + NAD(+) = (R)-3-hydroxy-2-oxo-4-phosphooxybutanoate + NADH + H(+). It participates in cofactor biosynthesis; pyridoxine 5'-phosphate biosynthesis; pyridoxine 5'-phosphate from D-erythrose 4-phosphate: step 2/5. In terms of biological role, catalyzes the oxidation of erythronate-4-phosphate to 3-hydroxy-2-oxo-4-phosphonooxybutanoate. The polypeptide is Erythronate-4-phosphate dehydrogenase (Colwellia psychrerythraea (strain 34H / ATCC BAA-681) (Vibrio psychroerythus)).